The chain runs to 762 residues: Coleoptile phototropism protein 1 (762 aa).

Residues 1 to 12 (MWESESESHGGE) show a composition bias toward basic and acidic residues. The disordered stretch occupies residues 1–29 (MWESESESHGGERGLVPVGGGGGSGRHEA). A BTB domain is found at 51 to 128 (SDLLVKVGDV…SYGMAVDLTA (78 aa)). The segment covering 227–238 (PAAIRGGGGSGG) has biased composition (gly residues). 4 disordered regions span residues 227–264 (PAAIRGGGGSGGTASPRWNVGGGGGGESKESSPSRQAV), 460–495 (MAVASSPGRGDPPPPPQPEYYSGRMPPSSAAAASAS), 687–718 (QVDGRGGGAPSPAAAKIGKQQQQGTSASAWSS), and 731–762 (GADAAAGGGVAPPGGGEAAARKGPRRWRNSIS). The NPH3 domain occupies 268-607 (DWWFEDVSVL…VQVLFTEQVK (340 aa)). Residues 654-691 (AAAKKDINTLKFELESMKAKYLELQHEMDALQKQVDGR) are a coiled coil. Low complexity predominate over residues 696 to 709 (PSPAAAKIGKQQQQ). The segment covering 736 to 747 (AGGGVAPPGGGE) has biased composition (gly residues). Positions 752–762 (KGPRRWRNSIS) are enriched in basic residues.

The protein belongs to the NPH3 family.

Its pathway is protein modification; protein ubiquitination. Its function is as follows. May act as a substrate-specific adapter of an E3 ubiquitin-protein ligase complex (CUL3-RBX1-BTB) which mediates the ubiquitination and subsequent proteasomal degradation of target proteins. Plays a role as signal transduction component in coleoptile phototropism and lateral translocation of auxin. This chain is Coleoptile phototropism protein 1 (CPT1), found in Oryza sativa subsp. japonica (Rice).